An 86-amino-acid chain; its full sequence is Beta-mammal/insect toxin To1 (86 aa).

The first 20 residues, 1 to 20 (MTRFVLFISCFFLIDMIVEC), serve as a signal peptide directing secretion. Residues 22–84 (KEGYLVGNDG…TWSSATNKCK (63 aa)) form the LCN-type CS-alpha/beta domain. 4 disulfide bridges follow: Cys-32–Cys-83, Cys-36–Cys-58, Cys-44–Cys-64, and Cys-48–Cys-66. The residue at position 84 (Lys-84) is a Lysine amide.

Belongs to the long (4 C-C) scorpion toxin superfamily. Sodium channel inhibitor family. Beta subfamily. In terms of tissue distribution, expressed by the venom gland.

It localises to the secreted. Beta toxin that show multiple effects. It enhances the open probability at more negative potentials of human Nav1.3/SCN3A and Nav1.6/SCN8A, of the insect channel BgNaV1 and of arachnid VdNaV1 channel. It promotes an important shift in slow inactivation processes as a function of the prepulse voltage in human Nav1.3/SCN3A and Nav1.6/SCN8A and a small shift in Nav1.1/SCN1A, Nav1.2/SCN2A and Nav1.4/SCN4A. Finally, it reduces the peak of sodium currents in Nav1.3/SCN3A (80% inhibition at 70 nM of toxin), Nav1.6/SCN8A (55.3%), Nav1.1/SCN1A (53.3%), Nav1.5/SCN5A (46.7%), Nav1.2/SCN2A (42.7%) and Nav1.4/SCN4A (20%) voltage-gated sodium channels. It has also been shown to affect the sodium current permeability of rat cerebellum granular cells in a partially reversible manner. In vivo, an intraperitoneal injection (20 ug) into mice produces excitability, respiratory problems, convulsions and death, within the first 30 minutes after injection. The protein is Beta-mammal/insect toxin To1 of Tityus obscurus (Amazonian scorpion).